We begin with the raw amino-acid sequence, 154 residues long: Thioredoxin-like protein CXXS2 (154 aa).

A Thioredoxin domain is found at 23-148 (RRNKTQARSQ…LQKKTAAAAN (126 aa)). Phosphoserine is present on serine 31.

It belongs to the thioredoxin family. As to expression, ubiquitous.

It is found in the cytoplasm. Possesses low disulfide reductase activity, but efficient protein disulfide isomerase activity. Does not possess deglutathionylation activity. This Arabidopsis thaliana (Mouse-ear cress) protein is Thioredoxin-like protein CXXS2 (CXXS2).